Reading from the N-terminus, the 290-residue chain is Fructokinase (290 aa).

Residue threonine 130 participates in ATP binding. Zn(2+) is bound by residues histidine 153, cysteine 169, histidine 172, and cysteine 175. Residues proline 183 and 231-235 each bind ATP; that span reads GVMEK.

The protein belongs to the ROK (NagC/XylR) family. In terms of assembly, homodimer. Requires Mg(2+) as cofactor.

It catalyses the reaction D-fructose + ATP = D-fructose 6-phosphate + ADP + H(+). Its activity is regulated as follows. Inactivated by EDTA. Inhibition by zinc ions (Potential). In Lactococcus lactis subsp. cremoris (Streptococcus cremoris), this protein is Fructokinase (scrK).